The primary structure comprises 227 residues: Hydroxylase/desaturase asaB (227 aa).

Belongs to the asaB hydroxylase/desaturase family.

It participates in secondary metabolite biosynthesis. Its function is as follows. Hydroxylase/desaturase; part of the gene cluster that mediates the biosynthesis of aspergillic acid, a hydroxamic acid-containing pyrazinone with aliphatic side chains that originates from leucine (Leu) and isoleucine (Ile). Aspergillic acid has antibiotic properties and was shown to be lethal to mice. The first step in the pathway is the production of deoxyaspergillic acid via a condensation between the Ile amine and the Leu carboxylic acid, followed by a reductive release from the protein forming the dipeptide aldehyde NH(2)-Leu-Ile-CHO, which could undergo an intermolecular cyclization resulting in a dihydropyrazinone. As the NRPS asaC lacks a condensation domain, it is improbable that it is responsible for condensation of Leu and Ile. One possibility is that asaC acts on a previously condensed dipeptide and functions as a Leu-Ile reductase to yield deoxyaspergillic acid. After asaC forms deoxyaspergillic acid, the cytochrome P450 asaD oxidizes the pyrazinone to the hydroxamic acid-containing bioactive metabolite aspergillic acid. The hydroxylase/desaturase asaB can then convert aspergillic acid to hydroxyaspergillic acid. Both aspergillic acid and hydroxyaspergillic acid can form complexes with iron producing ferriaspergillin analogs. The sequence is that of Hydroxylase/desaturase asaB from Aspergillus flavus (strain ATCC 200026 / FGSC A1120 / IAM 13836 / NRRL 3357 / JCM 12722 / SRRC 167).